Reading from the N-terminus, the 440-residue chain is Xylose isomerase (440 aa).

2 residues coordinate Mg(2+): D307 and D309.

It belongs to the xylose isomerase family. As to quaternary structure, homotetramer. It depends on Mg(2+) as a cofactor.

The protein resides in the cytoplasm. It carries out the reaction alpha-D-xylose = alpha-D-xylulofuranose. The polypeptide is Xylose isomerase (Escherichia coli (strain K12 / MC4100 / BW2952)).